Reading from the N-terminus, the 91-residue chain is Small ribosomal subunit protein uS15 (91 aa).

Belongs to the universal ribosomal protein uS15 family. In terms of assembly, part of the 30S ribosomal subunit. Forms a bridge to the 50S subunit in the 70S ribosome, contacting the 23S rRNA.

Functionally, one of the primary rRNA binding proteins, it binds directly to 16S rRNA where it helps nucleate assembly of the platform of the 30S subunit by binding and bridging several RNA helices of the 16S rRNA. In terms of biological role, forms an intersubunit bridge (bridge B4) with the 23S rRNA of the 50S subunit in the ribosome. The sequence is that of Small ribosomal subunit protein uS15 from Cytophaga hutchinsonii (strain ATCC 33406 / DSM 1761 / CIP 103989 / NBRC 15051 / NCIMB 9469 / D465).